We begin with the raw amino-acid sequence, 489 residues long: Protein LMBR1L (489 aa).

Residues 1–21 lie on the Extracellular side of the membrane; that stretch reads MEAADYEVLSVREQLFHDRVR. The tract at residues 1 to 59 is interaction with LGB; the sequence is MEAADYEVLSVREQLFHDRVRECIISILLFATLYILCHIFLTRFKKPAEFTTVDDEDAT. Residues 1–76 form an LCN1-binding region; the sequence is MEAADYEVLS…LCTFTLAVAL (76 aa). Residues 22–42 traverse the membrane as a helical segment; that stretch reads ECIISILLFATLYILCHIFLT. The Cytoplasmic segment spans residues 43–66; the sequence is RFKKPAEFTTVDDEDATVNKIALE. A helical transmembrane segment spans residues 67 to 87; it reads LCTFTLAVALGAVLLLPFSII. Topologically, residues 88-114 are extracellular; sequence SNEVLLSLPRNYYIQWLNGSLIHGLWN. The helical transmembrane segment at 115-135 threads the bilayer; sequence LVFLFSNLSLVFLMPFAYFFT. The Cytoplasmic segment spans residues 136–154; sequence ESEGFAGSRKGVLGRVYET. Residues 155 to 175 form a helical membrane-spanning segment; it reads VVMLILLTLLVLGMVWVASAI. Residues 176 to 196 lie on the Extracellular side of the membrane; the sequence is VDNDKASRESLYDFWEYYLPY. Residues 197 to 217 form a helical membrane-spanning segment; that stretch reads LYSCISFLGVLLLLVCTPLGL. The Cytoplasmic portion of the chain corresponds to 218-305; sequence ARMFSVTGKL…NLGYPLAMLC (88 aa). Residues 306-326 form a helical membrane-spanning segment; the sequence is LLVLTGLSVLIVAVHILELLI. Residues 327-350 lie on the Extracellular side of the membrane; the sequence is DEAAMPRGMQDAALGQASFSKLGS. Residues 351–371 form a helical membrane-spanning segment; sequence FGAIIQVVLIFYLMVSSVVGF. Over 372–388 the chain is Cytoplasmic; sequence YSSPLFGSLRPRWHDTS. A helical transmembrane segment spans residues 389 to 409; that stretch reads MTQIIGNCVCLLVLSSALPVF. Over 410–431 the chain is Extracellular; that stretch reads SRTLGLTRFDLLGDFGRFNWLG. A helical membrane pass occupies residues 432-452; it reads NFYIVFLYNAAFAGLTTLCLV. Residues 453–489 are Cytoplasmic-facing; that stretch reads KTFTAAVRAELIRAFGLDRLPLPVSGFPRASRKKQHQ.

It belongs to the LIMR family. Dimer. Can also form higher oligomers. Interacts with LCN1; this interaction mediates the endocytosis of LCN1. Interacts with UBAC2, FAF2, VCP, AMFR, ZNRF3, CTNNB1, LRP6, GSK3B, FZD6, DVL2 and RNF43. Interacts with GSK3A. Interaction with LGB and SCGB1A1 is controversial. As to expression, highly expressed in the bone marrow, thymus, spleen and lymphocytes.

The protein resides in the cell membrane. The protein localises to the endoplasmic reticulum membrane. Plays an essential role in lymphocyte development by negatively regulating the canonical Wnt signaling pathway. In association with UBAC2 and E3 ubiquitin-protein ligase AMFR, promotes the ubiquitin-mediated degradation of CTNNB1 and Wnt receptors FZD6 and LRP6. LMBR1L stabilizes the beta-catenin destruction complex that is required for regulating CTNNB1 levels. Acts as a LCN1 receptor and can mediate its endocytosis. This Mus musculus (Mouse) protein is Protein LMBR1L (Lmbr1l).